The following is a 107-amino-acid chain: Phosphoribosyl-ATP pyrophosphatase (107 aa).

The protein belongs to the PRA-PH family.

It localises to the cytoplasm. The catalysed reaction is 1-(5-phospho-beta-D-ribosyl)-ATP + H2O = 1-(5-phospho-beta-D-ribosyl)-5'-AMP + diphosphate + H(+). It participates in amino-acid biosynthesis; L-histidine biosynthesis; L-histidine from 5-phospho-alpha-D-ribose 1-diphosphate: step 2/9. This is Phosphoribosyl-ATP pyrophosphatase from Neisseria gonorrhoeae (strain ATCC 700825 / FA 1090).